The primary structure comprises 231 residues: MSKNCAIVVAAGKGTRMNTDINKQFINLKGNPILYYTLKKFQDNTSIDNIVLVLSKDEIGYCVENVLKKYHLDKVTHIVEGGKTRQESVISGLNAVKDSEIVLIHDGARPFIEDRIIEDGIKYAKLYGASACGVKVKDTIKVIAEDGFSKDTLKREELFSVQTPQCFKYDLILNCHKKALKDNIEVTDDTSVVESYGHRVYLYEGSYNNIKITTPEDLPMGESILENIKTC.

This sequence belongs to the IspD/TarI cytidylyltransferase family. IspD subfamily.

The catalysed reaction is 2-C-methyl-D-erythritol 4-phosphate + CTP + H(+) = 4-CDP-2-C-methyl-D-erythritol + diphosphate. The protein operates within isoprenoid biosynthesis; isopentenyl diphosphate biosynthesis via DXP pathway; isopentenyl diphosphate from 1-deoxy-D-xylulose 5-phosphate: step 2/6. In terms of biological role, catalyzes the formation of 4-diphosphocytidyl-2-C-methyl-D-erythritol from CTP and 2-C-methyl-D-erythritol 4-phosphate (MEP). The polypeptide is 2-C-methyl-D-erythritol 4-phosphate cytidylyltransferase (Clostridium novyi (strain NT)).